The chain runs to 440 residues: Oligodendrocyte-myelin glycoprotein (440 aa).

An N-terminal signal peptide occupies residues 1–24 (MEYQILKMSLCLFILLFLTPGILC). An LRRNT domain is found at 25–55 (ICPLQCICTERHRHVDCSGRNLSTLPSGLQE). Residues Asn45 and Asn61 are each glycosylated (N-linked (GlcNAc...) asparagine). LRR repeat units follow at residues 56–77 (NIIH…LTQY), 79–100 (NLRT…LPRS), 101–121 (LWNM…DTAY), 124–145 (NLKY…KNTL), 147–168 (SLEV…MPSK), 169–189 (LHIV…TLIN), 192–213 (NLTH…SFDQ), and 216–239 (QLQE…TYLL). N-linked (GlcNAc...) asparagine glycosylation is present at Asn103. N-linked (GlcNAc...) asparagine glycosylation is found at Asn152, Asn176, Asn189, Asn192, and Asn234. Ser/Thr-rich repeat units lie at residues 229–270 (CDHK…YPTP), 271–292 (SGFT…INSL), 293–335 (SVVT…VPYP), 336–377 (EDTS…SPTP), and 378–416 (MTLS…TPLP). N-linked (GlcNAc...) asparagine glycosylation is found at Asn364 and Asn389. Ser417 is lipidated: GPI-anchor amidated serine. A propeptide spans 418-440 (VANAWKVNASFLLLLNVVVMLAV) (removed in mature form). The N-linked (GlcNAc...) asparagine glycan is linked to Asn425.

Binds to RTN4R. In terms of processing, O-glycosylated in its Ser/Thr-rich repeat domain. As to expression, oligodendrocytes and myelin of the central nervous system.

It localises to the cell membrane. Its function is as follows. Cell adhesion molecule contributing to the interactive process required for myelination in the central nervous system. The chain is Oligodendrocyte-myelin glycoprotein (OMG) from Homo sapiens (Human).